A 189-amino-acid chain; its full sequence is dCTP deaminase (189 aa).

DCTP-binding positions include 112 to 117, 136 to 138, Gln157, Tyr171, and Gln181; these read KSTYAR and TLE. Catalysis depends on Glu138, which acts as the Proton donor/acceptor.

Belongs to the dCTP deaminase family. As to quaternary structure, homotrimer.

The catalysed reaction is dCTP + H2O + H(+) = dUTP + NH4(+). The protein operates within pyrimidine metabolism; dUMP biosynthesis; dUMP from dCTP (dUTP route): step 1/2. Catalyzes the deamination of dCTP to dUTP. This chain is dCTP deaminase, found in Leptothrix cholodnii (strain ATCC 51168 / LMG 8142 / SP-6) (Leptothrix discophora (strain SP-6)).